We begin with the raw amino-acid sequence, 370 residues long: Putative agmatine deiminase (370 aa).

Cys-361 (amidino-cysteine intermediate) is an active-site residue.

This sequence belongs to the agmatine deiminase family.

The enzyme catalyses agmatine + H2O = N-carbamoylputrescine + NH4(+). The protein is Putative agmatine deiminase of Shewanella baltica (strain OS185).